The chain runs to 429 residues: Glucose-1-phosphate adenylyltransferase (429 aa).

Alpha-D-glucose 1-phosphate contacts are provided by residues tyrosine 116, glycine 181, glutamate 196–lysine 197, and serine 214.

It belongs to the bacterial/plant glucose-1-phosphate adenylyltransferase family. Homotetramer.

It carries out the reaction alpha-D-glucose 1-phosphate + ATP + H(+) = ADP-alpha-D-glucose + diphosphate. It participates in glycan biosynthesis; glycogen biosynthesis. Involved in the biosynthesis of ADP-glucose, a building block required for the elongation reactions to produce glycogen. Catalyzes the reaction between ATP and alpha-D-glucose 1-phosphate (G1P) to produce pyrophosphate and ADP-Glc. The sequence is that of Glucose-1-phosphate adenylyltransferase from Paramagnetospirillum magneticum (strain ATCC 700264 / AMB-1) (Magnetospirillum magneticum).